Consider the following 61-residue polypeptide: Large ribosomal subunit protein uL29 (61 aa).

This sequence belongs to the universal ribosomal protein uL29 family.

The polypeptide is Large ribosomal subunit protein uL29 (Campylobacter jejuni subsp. jejuni serotype O:6 (strain 81116 / NCTC 11828)).